A 1355-amino-acid polypeptide reads, in one-letter code: DNA-directed RNA polymerase subunit beta' (1355 aa).

C219, C293, C300, and C303 together coordinate Zn(2+). Residues 1331 to 1355 form a disordered region; sequence AEVEVDDEVDDDYEDDDEDDDDYED.

It belongs to the RNA polymerase beta' chain family. RpoC2 subfamily. As to quaternary structure, in cyanobacteria the RNAP catalytic core is composed of 2 alpha, 1 beta, 1 beta', 1 gamma and 1 omega subunit. When a sigma factor is associated with the core the holoenzyme is formed, which can initiate transcription. Zn(2+) is required as a cofactor.

The enzyme catalyses RNA(n) + a ribonucleoside 5'-triphosphate = RNA(n+1) + diphosphate. DNA-dependent RNA polymerase catalyzes the transcription of DNA into RNA using the four ribonucleoside triphosphates as substrates. This Nostoc sp. (strain PCC 7120 / SAG 25.82 / UTEX 2576) protein is DNA-directed RNA polymerase subunit beta'.